A 106-amino-acid polypeptide reads, in one-letter code: ATP-dependent Clp protease adapter protein ClpS (106 aa).

Positions Met-1–Leu-22 are disordered.

It belongs to the ClpS family. Binds to the N-terminal domain of the chaperone ClpA.

Functionally, involved in the modulation of the specificity of the ClpAP-mediated ATP-dependent protein degradation. The chain is ATP-dependent Clp protease adapter protein ClpS from Halorhodospira halophila (strain DSM 244 / SL1) (Ectothiorhodospira halophila (strain DSM 244 / SL1)).